We begin with the raw amino-acid sequence, 700 residues long: Beta-galactosidase BgaB (700 aa).

The substrate site is built by Arg-122 and Asn-160. Glu-161 (proton donor) is an active-site residue. The Nucleophile role is filled by Glu-320. Substrate-binding positions include Trp-328 and 368–371 (EAFH).

It belongs to the glycosyl hydrolase 42 family. Trimer. Tetramer. The N-terminus is blocked.

It catalyses the reaction Hydrolysis of terminal non-reducing beta-D-galactose residues in beta-D-galactosides.. Its activity is regulated as follows. Inhibited by high substrate concentrations (100 mg/ml). No effect on activity with various EDTA concentrations (0-1 mM). 20-fold higher activity when cells grown on TOS than when cells grown on galactose, glucose and lactose. In terms of biological role, involved in the hydrolysis of transgalactooligosaccharides (TOS). Highly active towards Gal(beta1-4)Gal and Gal(beta1-4)-Gal-containing oligosaccharides. Low activity towards Gal(beta1-3)Gal, lactose and Gal(beta1-3)GalOMe. No activity towards Gal(beta1-6)Gal, Gal(beta1-4)Man, Gal(alpha1-4)Gal, Gal(alpha1-3)Gal(beta1-4)Gal, lactulose, 3'fucosyllactose, lacto-N-fucopentaose I, lacto-N-fucopentaose II, cellobiose, maltose or sucrose. No transglycosylation activity is found at high substrate concentrations (100 mg/ml) and only low transglycosylation activity at lower substrate concentrations (10 mg/ml). The protein is Beta-galactosidase BgaB (bgaB) of Bifidobacterium adolescentis (strain ATCC 15703 / DSM 20083 / NCTC 11814 / E194a).